We begin with the raw amino-acid sequence, 207 residues long: Mediator of RNA polymerase II transcription subunit 21 (207 aa).

A disordered region spans residues 36 to 120 (IPPPDVPDAA…APDSPRTFAS (85 aa)). The segment covering 91-108 (GEGAQTPGPAAGAGADPN) has biased composition (low complexity). The stretch at 146–194 (IDSSEAEQEKRIRELEGELRQVEEERELKMRELKRLRRTLENVLTAVET) forms a coiled coil.

The protein belongs to the Mediator complex subunit 21 family. As to quaternary structure, component of the Mediator complex.

It localises to the nucleus. Its function is as follows. Component of the Mediator complex, a coactivator involved in the regulated transcription of nearly all RNA polymerase II-dependent genes. Mediator functions as a bridge to convey information from gene-specific regulatory proteins to the basal RNA polymerase II transcription machinery. Mediator is recruited to promoters by direct interactions with regulatory proteins and serves as a scaffold for the assembly of a functional preinitiation complex with RNA polymerase II and the general transcription factors. The protein is Mediator of RNA polymerase II transcription subunit 21 (srb7) of Aspergillus fumigatus (strain ATCC MYA-4609 / CBS 101355 / FGSC A1100 / Af293) (Neosartorya fumigata).